We begin with the raw amino-acid sequence, 248 residues long: Protein PARTING DANCERS homolog (248 aa).

Over residues 1-10 (MERSTHSTGW) the composition is skewed to polar residues. The tract at residues 1-25 (MERSTHSTGWTCLPPPPPEPAAPGR) is disordered.

This sequence belongs to the ERCC1/RAD10/SWI10 family. As to quaternary structure, interacts with SHOC1 (via C-terminus). Interacts with HEI10. Highly expressed in anthers and pistil during meiosis. Expressed in pollen mother cells (PMCs) during meiosis. Expressed at low levels in roots, shoots, leaves, flowers, and glumes.

It is found in the chromosome. It localises to the nucleus. The protein localises to the cytoplasm. Its subcellular location is the cell membrane. Functionally, essential for normal crossover (CO) formation during meiosis. Essential component for the formation of class I meiotic COs. Interacts with SHOC1, another meiotic component, to regulate CO formation, possibly by stabilizing the recombination intermediates during meiosis. PTD and SHOC1 may form transient heterotrimeric or heterotetrameric complexes with HEI10 and/or ZIP4 to promote class I COs formation. Does not seem to be involved in early meiotic recombination steps involving double-strand break (DSB) formation, processing, and single-strand invasion. Does not seem to be involved in homologous pairing or synaptonemal complex (SC) assembly. The sequence is that of Protein PARTING DANCERS homolog from Oryza sativa subsp. japonica (Rice).